A 199-amino-acid chain; its full sequence is Peptidyl-tRNA hydrolase (199 aa).

Tyr-15 is a binding site for tRNA. His-20 acts as the Proton acceptor in catalysis. TRNA-binding residues include Tyr-66, Asn-68, and Asn-114.

It belongs to the PTH family. Monomer.

It localises to the cytoplasm. The catalysed reaction is an N-acyl-L-alpha-aminoacyl-tRNA + H2O = an N-acyl-L-amino acid + a tRNA + H(+). Its function is as follows. Hydrolyzes ribosome-free peptidyl-tRNAs (with 1 or more amino acids incorporated), which drop off the ribosome during protein synthesis, or as a result of ribosome stalling. In terms of biological role, catalyzes the release of premature peptidyl moieties from peptidyl-tRNA molecules trapped in stalled 50S ribosomal subunits, and thus maintains levels of free tRNAs and 50S ribosomes. This is Peptidyl-tRNA hydrolase from Burkholderia cenocepacia (strain HI2424).